Consider the following 513-residue polypeptide: ATP synthase subunit alpha (513 aa).

169 to 176 (GDRQTGKT) provides a ligand contact to ATP.

The protein belongs to the ATPase alpha/beta chains family. In terms of assembly, F-type ATPases have 2 components, CF(1) - the catalytic core - and CF(0) - the membrane proton channel. CF(1) has five subunits: alpha(3), beta(3), gamma(1), delta(1), epsilon(1). CF(0) has three main subunits: a(1), b(2) and c(9-12). The alpha and beta chains form an alternating ring which encloses part of the gamma chain. CF(1) is attached to CF(0) by a central stalk formed by the gamma and epsilon chains, while a peripheral stalk is formed by the delta and b chains.

It is found in the cell inner membrane. The catalysed reaction is ATP + H2O + 4 H(+)(in) = ADP + phosphate + 5 H(+)(out). Functionally, produces ATP from ADP in the presence of a proton gradient across the membrane. The alpha chain is a regulatory subunit. The chain is ATP synthase subunit alpha from Mannheimia succiniciproducens (strain KCTC 0769BP / MBEL55E).